The sequence spans 972 residues: Isoleucine--tRNA ligase (972 aa).

A 'HIGH' region motif is present at residues 63–73 (PYANGNIHIGH). Residue glutamate 603 coordinates L-isoleucyl-5'-AMP. A 'KMSKS' region motif is present at residues 644 to 648 (KMSKS). Lysine 647 is an ATP binding site.

This sequence belongs to the class-I aminoacyl-tRNA synthetase family. IleS type 1 subfamily. As to quaternary structure, monomer.

The protein localises to the cytoplasm. The catalysed reaction is tRNA(Ile) + L-isoleucine + ATP = L-isoleucyl-tRNA(Ile) + AMP + diphosphate. In terms of biological role, catalyzes the attachment of isoleucine to tRNA(Ile). As IleRS can inadvertently accommodate and process structurally similar amino acids such as valine, to avoid such errors it has two additional distinct tRNA(Ile)-dependent editing activities. One activity is designated as 'pretransfer' editing and involves the hydrolysis of activated Val-AMP. The other activity is designated 'posttransfer' editing and involves deacylation of mischarged Val-tRNA(Ile). This Brucella melitensis biotype 1 (strain ATCC 23456 / CCUG 17765 / NCTC 10094 / 16M) protein is Isoleucine--tRNA ligase.